A 186-amino-acid chain; its full sequence is Crossover junction endodeoxyribonuclease RuvC (186 aa).

Residues Asp7, Glu67, and Asp140 contribute to the active site. The Mg(2+) site is built by Asp7, Glu67, and Asp140.

It belongs to the RuvC family. As to quaternary structure, homodimer which binds Holliday junction (HJ) DNA. The HJ becomes 2-fold symmetrical on binding to RuvC with unstacked arms; it has a different conformation from HJ DNA in complex with RuvA. In the full resolvosome a probable DNA-RuvA(4)-RuvB(12)-RuvC(2) complex forms which resolves the HJ. It depends on Mg(2+) as a cofactor.

It is found in the cytoplasm. It carries out the reaction Endonucleolytic cleavage at a junction such as a reciprocal single-stranded crossover between two homologous DNA duplexes (Holliday junction).. In terms of biological role, the RuvA-RuvB-RuvC complex processes Holliday junction (HJ) DNA during genetic recombination and DNA repair. Endonuclease that resolves HJ intermediates. Cleaves cruciform DNA by making single-stranded nicks across the HJ at symmetrical positions within the homologous arms, yielding a 5'-phosphate and a 3'-hydroxyl group; requires a central core of homology in the junction. The consensus cleavage sequence is 5'-(A/T)TT(C/G)-3'. Cleavage occurs on the 3'-side of the TT dinucleotide at the point of strand exchange. HJ branch migration catalyzed by RuvA-RuvB allows RuvC to scan DNA until it finds its consensus sequence, where it cleaves and resolves the cruciform DNA. This is Crossover junction endodeoxyribonuclease RuvC from Chloroherpeton thalassium (strain ATCC 35110 / GB-78).